The chain runs to 426 residues: 3-phosphoshikimate 1-carboxyvinyltransferase (426 aa).

The 3-phosphoshikimate site is built by K21, S22, and R26. K21 serves as a coordination point for phosphoenolpyruvate. Positions 93 and 121 each coordinate phosphoenolpyruvate. 3-phosphoshikimate contacts are provided by S165, Q167, D313, and K340. Phosphoenolpyruvate is bound at residue Q167. Residue D313 is the Proton acceptor of the active site. Phosphoenolpyruvate is bound by residues R344 and R386.

Belongs to the EPSP synthase family. As to quaternary structure, monomer.

It localises to the cytoplasm. It catalyses the reaction 3-phosphoshikimate + phosphoenolpyruvate = 5-O-(1-carboxyvinyl)-3-phosphoshikimate + phosphate. Its pathway is metabolic intermediate biosynthesis; chorismate biosynthesis; chorismate from D-erythrose 4-phosphate and phosphoenolpyruvate: step 6/7. In terms of biological role, catalyzes the transfer of the enolpyruvyl moiety of phosphoenolpyruvate (PEP) to the 5-hydroxyl of shikimate-3-phosphate (S3P) to produce enolpyruvyl shikimate-3-phosphate and inorganic phosphate. This chain is 3-phosphoshikimate 1-carboxyvinyltransferase, found in Solibacter usitatus (strain Ellin6076).